The following is a 77-amino-acid chain: Large ribosomal subunit protein uL24c (77 aa).

The protein belongs to the universal ribosomal protein uL24 family. As to quaternary structure, part of the 50S ribosomal subunit.

It is found in the plastid. Its subcellular location is the chloroplast. In terms of biological role, one of two assembly initiator proteins, it binds directly to the 5'-end of the 23S rRNA, where it nucleates assembly of the 50S subunit. The sequence is that of Large ribosomal subunit protein uL24c (rpl24) from Trieres chinensis (Marine centric diatom).